The primary structure comprises 156 residues: Small ribosomal subunit protein uS7 (156 aa).

This sequence belongs to the universal ribosomal protein uS7 family. Part of the 30S ribosomal subunit. Contacts proteins S9 and S11.

In terms of biological role, one of the primary rRNA binding proteins, it binds directly to 16S rRNA where it nucleates assembly of the head domain of the 30S subunit. Is located at the subunit interface close to the decoding center, probably blocks exit of the E-site tRNA. The chain is Small ribosomal subunit protein uS7 from Acaryochloris marina (strain MBIC 11017).